A 260-amino-acid polypeptide reads, in one-letter code: Type III pantothenate kinase (260 aa).

Asp-6–Val-13 contacts ATP. Substrate is bound at residue Gly-108–Arg-111. Catalysis depends on Asp-110, which acts as the Proton acceptor. Asp-130 serves as a coordination point for K(+). ATP is bound at residue Thr-133. Thr-187 serves as a coordination point for substrate.

The protein belongs to the type III pantothenate kinase family. In terms of assembly, homodimer. The cofactor is NH4(+). It depends on K(+) as a cofactor.

The protein localises to the cytoplasm. It catalyses the reaction (R)-pantothenate + ATP = (R)-4'-phosphopantothenate + ADP + H(+). It participates in cofactor biosynthesis; coenzyme A biosynthesis; CoA from (R)-pantothenate: step 1/5. Functionally, catalyzes the phosphorylation of pantothenate (Pan), the first step in CoA biosynthesis. The chain is Type III pantothenate kinase from Rhizorhabdus wittichii (strain DSM 6014 / CCUG 31198 / JCM 15750 / NBRC 105917 / EY 4224 / RW1) (Sphingomonas wittichii).